Reading from the N-terminus, the 269-residue chain is Small ribosomal subunit protein uS2 (269 aa).

Residues 228-269 (QLDSDDDYEEFDESLAEGDYDDYDEEEDEDSETVSSQEGEEE) are disordered. Residues 230–269 (DSDDDYEEFDESLAEGDYDDYDEEEDEDSETVSSQEGEEE) are compositionally biased toward acidic residues.

It belongs to the universal ribosomal protein uS2 family.

The chain is Small ribosomal subunit protein uS2 from Crocosphaera subtropica (strain ATCC 51142 / BH68) (Cyanothece sp. (strain ATCC 51142)).